The sequence spans 414 residues: Dual-specificity RNA methyltransferase RlmN (414 aa).

The span at 1–13 shows a compositional bias: polar residues; that stretch reads MTSAVGISVPNTD. Positions 1 to 22 are disordered; that stretch reads MTSAVGISVPNTDAQSSQSASQ. Glutamate 124 serves as the catalytic Proton acceptor. One can recognise a Radical SAM core domain in the interval 134–377; the sequence is TGSRKTLCIS…CTIRQTRGDD (244 aa). An intrachain disulfide couples cysteine 141 to cysteine 382. [4Fe-4S] cluster contacts are provided by cysteine 148, cysteine 152, and cysteine 155. S-adenosyl-L-methionine-binding positions include 204-205, serine 236, 258-260, and asparagine 339; these read GE and SLH. Cysteine 382 functions as the S-methylcysteine intermediate in the catalytic mechanism.

Belongs to the radical SAM superfamily. RlmN family. [4Fe-4S] cluster serves as cofactor.

It localises to the cytoplasm. It carries out the reaction adenosine(2503) in 23S rRNA + 2 reduced [2Fe-2S]-[ferredoxin] + 2 S-adenosyl-L-methionine = 2-methyladenosine(2503) in 23S rRNA + 5'-deoxyadenosine + L-methionine + 2 oxidized [2Fe-2S]-[ferredoxin] + S-adenosyl-L-homocysteine. The catalysed reaction is adenosine(37) in tRNA + 2 reduced [2Fe-2S]-[ferredoxin] + 2 S-adenosyl-L-methionine = 2-methyladenosine(37) in tRNA + 5'-deoxyadenosine + L-methionine + 2 oxidized [2Fe-2S]-[ferredoxin] + S-adenosyl-L-homocysteine. Its function is as follows. Specifically methylates position 2 of adenine 2503 in 23S rRNA and position 2 of adenine 37 in tRNAs. m2A2503 modification seems to play a crucial role in the proofreading step occurring at the peptidyl transferase center and thus would serve to optimize ribosomal fidelity. The sequence is that of Dual-specificity RNA methyltransferase RlmN from Acinetobacter baylyi (strain ATCC 33305 / BD413 / ADP1).